Consider the following 89-residue polypeptide: Acylphosphatase (89 aa).

The 87-residue stretch at 3–89 (HIHLQVFGRV…NQKLSDFRSI (87 aa)) folds into the Acylphosphatase-like domain. Residues R18 and N36 contribute to the active site.

Belongs to the acylphosphatase family.

The catalysed reaction is an acyl phosphate + H2O = a carboxylate + phosphate + H(+). This chain is Acylphosphatase (acyP), found in Staphylococcus aureus (strain Mu3 / ATCC 700698).